The following is a 137-amino-acid chain: Large ribosomal subunit protein uL16 (137 aa).

This sequence belongs to the universal ribosomal protein uL16 family. As to quaternary structure, part of the 50S ribosomal subunit.

Binds 23S rRNA and is also seen to make contacts with the A and possibly P site tRNAs. This is Large ribosomal subunit protein uL16 from Streptococcus uberis (strain ATCC BAA-854 / 0140J).